Consider the following 58-residue polypeptide: UPF0391 membrane protein Sbal195_1447 (58 aa).

Helical transmembrane passes span 6-26 (LVFL…IAGA) and 28-48 (AGIA…SLLV).

This sequence belongs to the UPF0391 family.

It localises to the cell membrane. The polypeptide is UPF0391 membrane protein Sbal195_1447 (Shewanella baltica (strain OS195)).